The sequence spans 376 residues: D-alanine--D-alanine ligase (376 aa).

The ATP-grasp domain occupies 150 to 358; it reads KIIFEKEGLP…YSELINKLIE (209 aa). Residue 183–238 coordinates ATP; sequence EGRLTYPCFVKPSNAGSSVGVNKASDRESLVKALNIAAKNDRRILVEEFINGREIE. Residues Asp-311, Glu-325, and Asn-327 each coordinate Mg(2+).

Belongs to the D-alanine--D-alanine ligase family. The cofactor is Mg(2+). Requires Mn(2+) as cofactor.

The protein resides in the cytoplasm. The enzyme catalyses 2 D-alanine + ATP = D-alanyl-D-alanine + ADP + phosphate + H(+). It functions in the pathway cell wall biogenesis; peptidoglycan biosynthesis. Cell wall formation. This chain is D-alanine--D-alanine ligase, found in Ruminiclostridium cellulolyticum (strain ATCC 35319 / DSM 5812 / JCM 6584 / H10) (Clostridium cellulolyticum).